The following is a 298-amino-acid chain: Protoheme IX farnesyltransferase (298 aa).

9 helical membrane passes run Val-24 to Pro-44, Leu-49 to Phe-69, Leu-100 to Pro-120, Leu-121 to Leu-141, Ile-149 to Gly-169, Ala-175 to Leu-195, Leu-220 to Gly-240, Trp-244 to Leu-264, and Phe-277 to Leu-297.

This sequence belongs to the UbiA prenyltransferase family. Protoheme IX farnesyltransferase subfamily.

The protein localises to the cell inner membrane. It carries out the reaction heme b + (2E,6E)-farnesyl diphosphate + H2O = Fe(II)-heme o + diphosphate. Its pathway is porphyrin-containing compound metabolism; heme O biosynthesis; heme O from protoheme: step 1/1. Functionally, converts heme B (protoheme IX) to heme O by substitution of the vinyl group on carbon 2 of heme B porphyrin ring with a hydroxyethyl farnesyl side group. The polypeptide is Protoheme IX farnesyltransferase (Albidiferax ferrireducens (strain ATCC BAA-621 / DSM 15236 / T118) (Rhodoferax ferrireducens)).